Here is a 216-residue protein sequence, read N- to C-terminus: Ribose-5-phosphate isomerase A (216 aa).

Substrate contacts are provided by residues 26–29 (TGST), 79–82 (DGAD), and 92–95 (KGGG). The Proton acceptor role is filled by Glu101. Residue Lys119 coordinates substrate.

It belongs to the ribose 5-phosphate isomerase family. Homodimer.

It catalyses the reaction aldehydo-D-ribose 5-phosphate = D-ribulose 5-phosphate. It participates in carbohydrate degradation; pentose phosphate pathway; D-ribose 5-phosphate from D-ribulose 5-phosphate (non-oxidative stage): step 1/1. In terms of biological role, catalyzes the reversible conversion of ribose-5-phosphate to ribulose 5-phosphate. The protein is Ribose-5-phosphate isomerase A of Legionella pneumophila (strain Corby).